The primary structure comprises 345 residues: N-acetyl-gamma-glutamyl-phosphate reductase (345 aa).

Cys153 is an active-site residue.

This sequence belongs to the NAGSA dehydrogenase family. Type 1 subfamily.

The protein resides in the cytoplasm. The enzyme catalyses N-acetyl-L-glutamate 5-semialdehyde + phosphate + NADP(+) = N-acetyl-L-glutamyl 5-phosphate + NADPH + H(+). It functions in the pathway amino-acid biosynthesis; L-arginine biosynthesis; N(2)-acetyl-L-ornithine from L-glutamate: step 3/4. Catalyzes the NADPH-dependent reduction of N-acetyl-5-glutamyl phosphate to yield N-acetyl-L-glutamate 5-semialdehyde. The polypeptide is N-acetyl-gamma-glutamyl-phosphate reductase (Methylacidiphilum infernorum (isolate V4) (Methylokorus infernorum (strain V4))).